A 334-amino-acid chain; its full sequence is MTLRIGIIGTGAIGTDHARRINRVLSGAEVTAVTDVNRDSAEACVAGVAPGAQILGSAEEVIAASDAVLVCSWGTAHETQVLAAIAAGKPCFCEKPLATEAYGARRIVEAEEAMGRRLVQVGFMRRYDRGYVALKETVRTRLGPPLMIHAAHRNPSVPGRYRTPMAIHDTLIHEIDVLRWLLDDEYVSAQVIFPRATRHTHAGLRDPQIVLLETAKGVRIDVEIFVNCRYGYDIQCEVVGEEGTARLPEPTAIPTRLGAVFGQPILMDWKDRFIDSYDVELQDFLKAAAQGTAAGPSAWDGYAAAITADVCVQAQERPGAILPVTLPARPALYA.

This sequence belongs to the Gfo/Idh/MocA family. Homotetramer.

The enzyme catalyses myo-inositol + NAD(+) = scyllo-inosose + NADH + H(+). In terms of biological role, involved in the oxidation of myo-inositol (MI) to 2-keto-myo-inositol (2KMI or 2-inosose). The polypeptide is Inositol 2-dehydrogenase (Cereibacter sphaeroides (strain ATCC 17023 / DSM 158 / JCM 6121 / CCUG 31486 / LMG 2827 / NBRC 12203 / NCIMB 8253 / ATH 2.4.1.) (Rhodobacter sphaeroides)).